Consider the following 878-residue polypeptide: Phosphoenolpyruvate carboxylase (878 aa).

Residues His-137 and Lys-545 contribute to the active site.

It belongs to the PEPCase type 1 family. The cofactor is Mg(2+).

It catalyses the reaction oxaloacetate + phosphate = phosphoenolpyruvate + hydrogencarbonate. Forms oxaloacetate, a four-carbon dicarboxylic acid source for the tricarboxylic acid cycle. In Photorhabdus laumondii subsp. laumondii (strain DSM 15139 / CIP 105565 / TT01) (Photorhabdus luminescens subsp. laumondii), this protein is Phosphoenolpyruvate carboxylase.